The following is a 321-amino-acid chain: MSPLPRVNIDEPKYDQNSYLGRAKHFFLLTNPLNVLASASKLEEARQIVIKYRAGKDVPECKTIDDVWRAKYLYDSAFHPETGEKQIVIGRMAAQMPMNTIITGGMMAFYKSTPAVVFWQWFNQTFNAIVNYTNRSGTSPISQQQLVTSYCLATSGALVTALSLNHAVKNMNPLLGRLVPLVAVGAANCINIPCMRMQELRNGVTLFDEHSNEMGISKKAAVVGISTVILSRIAMAIPGMTLTPVLMNVLEKRGFLAKYPRSNAPIQTLFCGFVLIFATPLGCAFFKQRADIKVDSLESEVRDSIRKKRPELETVWFNKGL.

5 helical membrane passes run 101–121 (IITG…FWQW), 146–168 (LVTS…NHAV), 174–194 (LLGR…NIPC), 220–240 (AAVV…IPGM), and 266–286 (IQTL…CAFF).

This sequence belongs to the sideroflexin family.

The protein localises to the mitochondrion membrane. Functionally, mitochondrial amino-acid transporter that mediates transport of serine into mitochondria. In Drosophila melanogaster (Fruit fly), this protein is Sideroflexin-1-3.